The following is a 345-amino-acid chain: Dimethyladenosine transferase 1, mitochondrial (345 aa).

Residues 1-27 (MAASGKLGTFRLPPLPTIREIIKLFGL) constitute a mitochondrion transit peptide. Residues Leu38, Gly63, Glu85, Lys86, Asp111, Val112, and Asn141 each contribute to the S-adenosyl-L-methionine site.

The protein belongs to the class I-like SAM-binding methyltransferase superfamily. rRNA adenine N(6)-methyltransferase family. KsgA subfamily. In terms of assembly, interacts with mitochondrial RNA polymerase POLRMT. Interacts with TFAM. Remains bound to the maturing mtSSU until the late stages of assembly. In terms of tissue distribution, ubiquitously expressed.

It localises to the mitochondrion. It catalyses the reaction adenosine(N)/adenosine(N+1) in rRNA + 4 S-adenosyl-L-methionine = N(6)-dimethyladenosine(N)/N(6)-dimethyladenosine(N+1) in rRNA + 4 S-adenosyl-L-homocysteine + 4 H(+). In terms of biological role, mitochondrial methyltransferase which uses S-adenosyl methionine to dimethylate two highly conserved adjacent adenosine residues (A1006 and A1007) within the loop of helix 45 at the 3-prime end of 12S rRNA, thereby regulating the assembly or stability of the small subunit of the mitochondrial ribosome. Also required for basal transcription of mitochondrial DNA, probably via its interaction with POLRMT and TFAM. Stimulates transcription independently of the methyltransferase activity. This Mus musculus (Mouse) protein is Dimethyladenosine transferase 1, mitochondrial (Tfb1m).